Reading from the N-terminus, the 147-residue chain is Hemoglobin subunit beta (147 aa).

V2 carries the N-acetylvaline modification. The region spanning 3–147 (HLTGEEKAAV…VANALAHKYH (145 aa)) is the Globin domain. A Phosphothreonine modification is found at T13. S45 bears the Phosphoserine mark. Residue K60 is modified to N6-acetyllysine. Heme b is bound at residue H64. The residue at position 83 (K83) is an N6-acetyllysine. H93 is a binding site for heme b. Residue C94 is modified to S-nitrosocysteine. N6-acetyllysine is present on K145.

This sequence belongs to the globin family. Heterotetramer of two alpha chains and two beta chains. Red blood cells.

Functionally, involved in oxygen transport from the lung to the various peripheral tissues. In Aotus azarae (Azara's night monkey), this protein is Hemoglobin subunit beta (HBB).